A 156-amino-acid polypeptide reads, in one-letter code: ATP synthase subunit b (156 aa).

The chain crosses the membrane as a helical span at residues 7 to 29 (LIGQLIAFALFTWFCVKFVWPPI).

Belongs to the ATPase B chain family. As to quaternary structure, F-type ATPases have 2 components, F(1) - the catalytic core - and F(0) - the membrane proton channel. F(1) has five subunits: alpha(3), beta(3), gamma(1), delta(1), epsilon(1). F(0) has three main subunits: a(1), b(2) and c(10-14). The alpha and beta chains form an alternating ring which encloses part of the gamma chain. F(1) is attached to F(0) by a central stalk formed by the gamma and epsilon chains, while a peripheral stalk is formed by the delta and b chains.

It localises to the cell inner membrane. Its function is as follows. F(1)F(0) ATP synthase produces ATP from ADP in the presence of a proton or sodium gradient. F-type ATPases consist of two structural domains, F(1) containing the extramembraneous catalytic core and F(0) containing the membrane proton channel, linked together by a central stalk and a peripheral stalk. During catalysis, ATP synthesis in the catalytic domain of F(1) is coupled via a rotary mechanism of the central stalk subunits to proton translocation. Component of the F(0) channel, it forms part of the peripheral stalk, linking F(1) to F(0). The chain is ATP synthase subunit b from Mannheimia succiniciproducens (strain KCTC 0769BP / MBEL55E).